The chain runs to 413 residues: Tyrosine--tRNA ligase (413 aa).

Residues 59 to 68 (PTAPDIHLGH) carry the 'HIGH' region motif. The 'KMSKS' region signature appears at 243-247 (KMSKS). K246 is an ATP binding site. Positions 351–411 (LAIGQLLKQA…GKRRFARVTL (61 aa)) constitute an S4 RNA-binding domain.

Belongs to the class-I aminoacyl-tRNA synthetase family. TyrS type 2 subfamily. In terms of assembly, homodimer.

The protein localises to the cytoplasm. The enzyme catalyses tRNA(Tyr) + L-tyrosine + ATP = L-tyrosyl-tRNA(Tyr) + AMP + diphosphate + H(+). In terms of biological role, catalyzes the attachment of tyrosine to tRNA(Tyr) in a two-step reaction: tyrosine is first activated by ATP to form Tyr-AMP and then transferred to the acceptor end of tRNA(Tyr). The polypeptide is Tyrosine--tRNA ligase (Burkholderia mallei (strain ATCC 23344)).